We begin with the raw amino-acid sequence, 294 residues long: G-protein coupled receptor homolog U51 (294 aa).

Over 1-14 (MKNIDLTNWKLLAE) the chain is Extracellular. Residues 15–35 (IYEYLFFFSFFFLCLLVIIVV) traverse the membrane as a helical segment. At 36-47 (KFNNSTVGREYT) the chain is on the cytoplasmic side. Residues 48 to 68 (FSTFSGMLVYILLLPVKMGML) traverse the membrane as a helical segment. Over 69–79 (TKMWDVSTDYC) the chain is Extracellular. The helical transmembrane segment at 80–102 (IILMFLSDFSFIFSSWALTLLAL) threads the bilayer. At 103-119 (ERINNFSFSEIKVNETK) the chain is on the cytoplasmic side. A helical transmembrane segment spans residues 120 to 140 (ILKQMSFPIIWVTSIFQAVQI). The Extracellular portion of the chain corresponds to 141 to 166 (SMKYKKSQMNLEDDYCLLAIERSAEE). A helical transmembrane segment spans residues 167 to 187 (AWILLMYTVVIPTFIVFFYVL). The Cytoplasmic segment spans residues 188 to 200 (NKRFLFLERDLNS). The helical transmembrane segment at 201–221 (IVTHLSLFLFFGALCFFPASV) threads the bilayer. Residues 222-236 (LNEFNCNRLFYGLHE) lie on the Extracellular side of the membrane. A helical membrane pass occupies residues 237–257 (LLIVCLELKIFYVPTMTYIIS). Topologically, residues 258–294 (CENYRLAAKAFFCKCFKPCFLMPSLRKLQQPTKSTQF) are cytoplasmic.

Belongs to the G-protein coupled receptor 1 family.

It is found in the host cell membrane. The polypeptide is G-protein coupled receptor homolog U51 (U51) (Human herpesvirus 7 (strain JI) (HHV-7)).